A 239-amino-acid chain; its full sequence is Proteasome activator complex subunit 2 (239 aa).

N-acetylalanine is present on Ala2. Ser10 carries the phosphoserine modification. The interval Asp65–Glu87 is disordered. The segment covering Pro72–Glu87 has biased composition (basic and acidic residues).

The protein belongs to the PA28 family. As to quaternary structure, heterodimer of PSME1 and PSME2, which forms a hexameric ring.

Its function is as follows. Implicated in immunoproteasome assembly and required for efficient antigen processing. The PA28 activator complex enhances the generation of class I binding peptides by altering the cleavage pattern of the proteasome. The sequence is that of Proteasome activator complex subunit 2 (Psme2) from Mus musculus (Mouse).